The sequence spans 405 residues: GTPase Obg (405 aa).

Residues 1–159 form the Obg domain; that stretch reads MRFIDEAVVT…KVLKFELKVV (159 aa). Positions 160–333 constitute an OBG-type G domain; that stretch reads ADVGLIGLPN…IKYHLMNEIE (174 aa). GTP-binding positions include 166–173, 191–195, 213–216, 283–286, and 314–316; these read GLPNAGKS, FTTLV, DIPG, NKID, and ATL. 2 residues coordinate Mg(2+): Ser173 and Thr193. Residues 371 to 382 show a composition bias toward basic and acidic residues; it reads YRAARKAAREGT. Positions 371 to 405 are disordered; it reads YRAARKAAREGTDLSDDDFDDSDDDDDGVEVVYAP. Residues 383–399 are compositionally biased toward acidic residues; that stretch reads DLSDDDFDDSDDDDDGV.

Belongs to the TRAFAC class OBG-HflX-like GTPase superfamily. OBG GTPase family. Monomer. Mg(2+) serves as cofactor.

Its subcellular location is the cytoplasm. In terms of biological role, an essential GTPase which binds GTP, GDP and possibly (p)ppGpp with moderate affinity, with high nucleotide exchange rates and a fairly low GTP hydrolysis rate. Plays a role in control of the cell cycle, stress response, ribosome biogenesis and in those bacteria that undergo differentiation, in morphogenesis control. This is GTPase Obg from Psychrobacter cryohalolentis (strain ATCC BAA-1226 / DSM 17306 / VKM B-2378 / K5).